The chain runs to 345 residues: S-adenosylmethionine:tRNA ribosyltransferase-isomerase (345 aa).

The protein belongs to the QueA family. In terms of assembly, monomer.

It localises to the cytoplasm. It catalyses the reaction 7-aminomethyl-7-carbaguanosine(34) in tRNA + S-adenosyl-L-methionine = epoxyqueuosine(34) in tRNA + adenine + L-methionine + 2 H(+). It functions in the pathway tRNA modification; tRNA-queuosine biosynthesis. Its function is as follows. Transfers and isomerizes the ribose moiety from AdoMet to the 7-aminomethyl group of 7-deazaguanine (preQ1-tRNA) to give epoxyqueuosine (oQ-tRNA). The chain is S-adenosylmethionine:tRNA ribosyltransferase-isomerase from Anaeromyxobacter dehalogenans (strain 2CP-1 / ATCC BAA-258).